Consider the following 66-residue polypeptide: Type 3 secretion system chaperone YscE (66 aa).

It belongs to the YscE family. As to quaternary structure, component of the heterodimeric YscE-YscG chaperone. The YscE-YscG chaperone forms a stable ternary complex with YscF/SctF. YscE interacts with YscG, but makes very little direct contact with YscF. Homodimer in solution.

The protein resides in the cytoplasm. Its function is as follows. Chaperone of the type III secretion system (T3SS), also called injectisome, which is used to inject bacterial effector proteins into eukaryotic host cells. Along with YscG, prevents premature polymerization of the YscF/SctF needle protein within the cytoplasm. Is also required for stable expression of cytosolic YscF and for YscF secretion. Likely plays a role in targeting YscF present in the cytosolic YscEFG complex to the T3SS apparatus. Required for Yop secretion. The polypeptide is Type 3 secretion system chaperone YscE (Yersinia pestis).